The chain runs to 430 residues: Divergent protein kinase domain 2A (430 aa).

The signal sequence occupies residues 1–35 (MWRLVPPKLGRLSRSLKLAALGSLLVLMVLHSPSL).

It belongs to the DIPK family.

It localises to the cytoplasmic vesicle. It is found in the COPI-coated vesicle. Its subcellular location is the golgi apparatus. The protein localises to the secreted. Functionally, may play a role in cardiomyocyte proliferation through paracrine signaling and activation of the PPI3K-AKT-CDK7 signaling cascade. The chain is Divergent protein kinase domain 2A from Homo sapiens (Human).